A 251-amino-acid polypeptide reads, in one-letter code: CDP-diacylglycerol pyrophosphatase (251 aa).

A helical membrane pass occupies residues 5–25; it reads GYFLLAVIVIVAAAGVGYWKF.

Belongs to the Cdh family.

It localises to the cell inner membrane. It catalyses the reaction a CDP-1,2-diacyl-sn-glycerol + H2O = a 1,2-diacyl-sn-glycero-3-phosphate + CMP + 2 H(+). It functions in the pathway phospholipid metabolism; CDP-diacylglycerol degradation; phosphatidate from CDP-diacylglycerol: step 1/1. In Salmonella paratyphi A (strain ATCC 9150 / SARB42), this protein is CDP-diacylglycerol pyrophosphatase.